The following is a 2210-amino-acid chain: RNA-directed RNA polymerase L (2210 aa).

Residues 26-285 (KAIFLSQTKL…KCAIMSEEDS (260 aa)) form an endonuclease region. Positions 51, 88, and 101 each coordinate Mn(2+). Lys-114 is an active-site residue. Residues 1163 to 1359 (LDMKSVVRQG…FLSDKLNKFV (197 aa)) form the RdRp catalytic domain. Asp-1319 contacts Mg(2+).

This sequence belongs to the Bunyavirales RNA polymerase family. In terms of assembly, homomultimer; the oligomeric structure is essential for the polymerase activity. Interacts with nucleoprotein N. Interacts with protein Z; this interaction inhibits viral transcription and replication, Z partially blocks the product exit tunnel for the releasing nascent RNA product. Mn(2+) serves as cofactor. Requires Mg(2+) as cofactor.

The protein localises to the virion. Its subcellular location is the host cytoplasm. The enzyme catalyses RNA(n) + a ribonucleoside 5'-triphosphate = RNA(n+1) + diphosphate. RNA-dependent RNA polymerase, which is responsible for the replication and transcription of the viral RNA genome using antigenomic RNA as an intermediate. During transcription, synthesizes subgenomic RNAs and assures their capping by a cap-snatching mechanism, which involves the endonuclease activity cleaving the host capped pre-mRNAs. These short capped RNAs are then used as primers for viral transcription. The 3'-end of subgenomic mRNAs molecules are heterogeneous and not polyadenylated. The replicase function is to direct synthesis of antigenomic and genomic RNA which are encapsidated and non capped. As a consequence of the use of the same enzyme for both transcription and replication, these mechanisms need to be well coordinated. These processes may be regulated by proteins N and Z in a dose-dependent manner. Z protein inhibits the viral polymerase L und thus the viral transcription and RNA synthesis. In Sigmodon alstoni (PIRV), this protein is RNA-directed RNA polymerase L.